A 183-amino-acid chain; its full sequence is Protein jagunal homolog 1-B (183 aa).

The Cytoplasmic segment spans residues 1-39; sequence MASRAGPRATGTDGSDYQHRERVASHYQMSVALKSEIKK. Residues 40–60 traverse the membrane as a helical segment; the sequence is LNIAHAVVWFLVAAQVLVSQL. Topologically, residues 61–71 are lumenal; sequence NLVSHKVVASP. The chain crosses the membrane as a helical span at residues 72 to 92; the sequence is YQWEYTYLLSIIPTVFSFMAL. Residues 93–99 lie on the Cytoplasmic side of the membrane; the sequence is PKNNISY. A helical membrane pass occupies residues 100-120; that stretch reads LVISMISGGLFCIGPILYGGM. Over 121-137 the chain is Lumenal; sequence EMFPVAQQLYRHGKAYR. Residues 138-158 traverse the membrane as a helical segment; that stretch reads FIFGFSAVSIMYLVLIISVQV. Topologically, residues 159 to 183 are cytoplasmic; sequence HGWQIYYSKKLLDAWFTNTQDKKKK.

Belongs to the jagunal family.

The protein resides in the endoplasmic reticulum membrane. Its function is as follows. Endoplasmic reticulum transmembrane protein involved in vesicle-mediated transport, which is required for neutrophil function. In Danio rerio (Zebrafish), this protein is Protein jagunal homolog 1-B (jagn1b).